Consider the following 268-residue polypeptide: (+)-cis,trans-nepetalactol synthase NEPS2 (268 aa).

Residues 16 to 22 (GGASGIG), 41 to 43 (DIQ), 65 to 66 (DI), Asn-92, 163 to 167 (YVMSK), and 196 to 200 (VLTPL) each bind NAD(+).

This sequence belongs to the short-chain dehydrogenases/reductases (SDR) family.

It carries out the reaction (S)-8-oxocitronellyl enol = cis-trans-nepetalactol. Its function is as follows. Functions as a non-oxidoreductive cyclase to promote the formation of cis-trans-nepetalactol. Cis-trans-nepetalactol is then oxidized by NEPS1 into cis-trans-nepetalactone, which belongs to a family of metabolites that are both insect-repellent and have euphoric effect in cats. Binds NAD(+) as classical short-chain dehydrogenase/reductase (SDR), but does not utilize it for its redox-neutral cyclase activity. The sequence is that of (+)-cis,trans-nepetalactol synthase NEPS2 from Nepeta racemosa (Catmint).